The sequence spans 37 residues: MKIRSSVKKICNKCYLIRRKNNLLVVCINNKHKQRQG.

The protein belongs to the bacterial ribosomal protein bL36 family.

It is found in the plastid. It localises to the chloroplast. The polypeptide is Large ribosomal subunit protein bL36c (rpl36) (Euglena gracilis).